The chain runs to 38 residues: Large ribosomal subunit protein bL36 (38 aa).

This sequence belongs to the bacterial ribosomal protein bL36 family.

In Synechocystis sp. (strain ATCC 27184 / PCC 6803 / Kazusa), this protein is Large ribosomal subunit protein bL36.